The primary structure comprises 216 residues: Probable nicotinate-nucleotide adenylyltransferase (216 aa).

Belongs to the NadD family.

The enzyme catalyses nicotinate beta-D-ribonucleotide + ATP + H(+) = deamido-NAD(+) + diphosphate. It functions in the pathway cofactor biosynthesis; NAD(+) biosynthesis; deamido-NAD(+) from nicotinate D-ribonucleotide: step 1/1. In terms of biological role, catalyzes the reversible adenylation of nicotinate mononucleotide (NaMN) to nicotinic acid adenine dinucleotide (NaAD). The sequence is that of Probable nicotinate-nucleotide adenylyltransferase from Pelobacter propionicus (strain DSM 2379 / NBRC 103807 / OttBd1).